The chain runs to 73 residues: MPNSIFKKQLSPIKPGDPIDYKDVELLKKFITERGKILPRRMTGLTSKQQRDLTLAVKRARIVALLPFVNPEG.

This sequence belongs to the bacterial ribosomal protein bS18 family. In terms of assembly, part of the 30S ribosomal subunit. Forms a tight heterodimer with protein bS6.

Its function is as follows. Binds as a heterodimer with protein bS6 to the central domain of the 16S rRNA, where it helps stabilize the platform of the 30S subunit. The sequence is that of Small ribosomal subunit protein bS18 from Prochlorococcus marinus subsp. pastoris (strain CCMP1986 / NIES-2087 / MED4).